The sequence spans 245 residues: 1-(5-phosphoribosyl)-5-[(5-phosphoribosylamino)methylideneamino] imidazole-4-carboxamide isomerase (245 aa).

The Proton acceptor role is filled by Asp-8. The active-site Proton donor is Asp-130.

Belongs to the HisA/HisF family.

The protein resides in the cytoplasm. It catalyses the reaction 1-(5-phospho-beta-D-ribosyl)-5-[(5-phospho-beta-D-ribosylamino)methylideneamino]imidazole-4-carboxamide = 5-[(5-phospho-1-deoxy-D-ribulos-1-ylimino)methylamino]-1-(5-phospho-beta-D-ribosyl)imidazole-4-carboxamide. The protein operates within amino-acid biosynthesis; L-histidine biosynthesis; L-histidine from 5-phospho-alpha-D-ribose 1-diphosphate: step 4/9. This chain is 1-(5-phosphoribosyl)-5-[(5-phosphoribosylamino)methylideneamino] imidazole-4-carboxamide isomerase, found in Pseudomonas syringae pv. tomato (strain ATCC BAA-871 / DC3000).